The primary structure comprises 423 residues: AP-1 complex subunit mu-2 (423 aa).

One can recognise an MHD domain in the interval 168–421 (KNEVFIDVIE…ITQSGDYQLR (254 aa)).

The protein belongs to the adaptor complexes medium subunit family. In terms of assembly, adaptor protein complex 1 (AP-1) is a heterotetramer composed of two large adaptins (gamma-type subunit AP1G1 and beta-type subunit AP1B1), a medium adaptin (mu-type subunit AP1M1 or AP1M2) and a small adaptin (sigma-type subunit AP1S1 or AP1S2 or AP1S3). Interacts with P2X4. Post-translationally, phosphorylation of membrane-bound AP1M1/AP1M2 increases its affinity for sorting signals.

It is found in the golgi apparatus. Its subcellular location is the cytoplasmic vesicle. The protein localises to the clathrin-coated vesicle membrane. In terms of biological role, subunit of clathrin-associated adaptor protein complex 1 that plays a role in protein sorting in the trans-Golgi network (TGN) and endosomes. The AP complexes mediate the recruitment of clathrin to membranes and the recognition of sorting signals within the cytosolic tails of transmembrane cargo molecules. This is AP-1 complex subunit mu-2 (AP1M2) from Homo sapiens (Human).